The sequence spans 728 residues: Catalase-peroxidase (728 aa).

The tryptophyl-tyrosyl-methioninium (Trp-Tyr) (with M-251) cross-link spans 97 to 225; sequence WHSAGTYRIA…LAAVMMGLIY (129 aa). H98 functions as the Proton acceptor in the catalytic mechanism. A cross-link (tryptophyl-tyrosyl-methioninium (Tyr-Met) (with W-97)) is located at residues 225–251; it reads YVNPEGVDGNPDPLRTAQDIRITFARM. Residue H266 participates in heme b binding.

This sequence belongs to the peroxidase family. Peroxidase/catalase subfamily. As to quaternary structure, homodimer or homotetramer. Requires heme b as cofactor. Formation of the three residue Trp-Tyr-Met cross-link is important for the catalase, but not the peroxidase activity of the enzyme.

The enzyme catalyses H2O2 + AH2 = A + 2 H2O. The catalysed reaction is 2 H2O2 = O2 + 2 H2O. Functionally, bifunctional enzyme with both catalase and broad-spectrum peroxidase activity. This chain is Catalase-peroxidase, found in Shewanella putrefaciens (strain CN-32 / ATCC BAA-453).